The chain runs to 155 residues: uncharacterized protein (155 aa).

This is an uncharacterized protein from Saccharomyces cerevisiae (strain ATCC 204508 / S288c) (Baker's yeast).